The primary structure comprises 325 residues: UPF0285 protein MM_0679 (325 aa).

It belongs to the UPF0285 family.

The sequence is that of UPF0285 protein MM_0679 from Methanosarcina mazei (strain ATCC BAA-159 / DSM 3647 / Goe1 / Go1 / JCM 11833 / OCM 88) (Methanosarcina frisia).